We begin with the raw amino-acid sequence, 369 residues long: Deoxyhypusine synthase (369 aa).

Residues 105–109, 131–133, E137, and D238 contribute to the NAD(+) site; these read SNLIS and TAG. A spermidine-binding site is contributed by 136–137; the sequence is EE. D243 contacts spermidine. G283 is a binding site for NAD(+). Position 288 (H288) interacts with spermidine. 308-309 is a binding site for NAD(+); the sequence is TA. Residues 314–316 and 323–329 contribute to the spermidine site; these read GSD and EAVSWGK. K329 acts as the Nucleophile in catalysis. 342-343 provides a ligand contact to NAD(+); it reads DA.

Belongs to the deoxyhypusine synthase family. The cofactor is NAD(+).

It catalyses the reaction [eIF5A protein]-L-lysine + spermidine = [eIF5A protein]-deoxyhypusine + propane-1,3-diamine. It functions in the pathway protein modification; eIF5A hypusination. Catalyzes the NAD-dependent oxidative cleavage of spermidine and the subsequent transfer of the butylamine moiety of spermidine to the epsilon-amino group of a critical lysine residue of the eIF-5A precursor protein to form the intermediate deoxyhypusine residue. This is the first step of the post-translational modification of that lysine into an unusual amino acid residue named hypusine. Hypusination is unique to mature eIF-5A factor and is essential for its function. The polypeptide is Deoxyhypusine synthase (Dhps) (Mus musculus (Mouse)).